The primary structure comprises 985 residues: Cation channel sperm-associated auxiliary subunit epsilon (985 aa).

Residues 1–35 (MPSAGQRKPGSLLALQALQKWLLRGGVGAMLARQV) form the signal peptide. At 36–937 (VAALLLWLSC…ESLGMIPRSS (902 aa)) the chain is on the extracellular side. Intrachain disulfides connect Cys-87–Cys-101, Cys-130–Cys-235, Cys-275–Cys-365, and Cys-439–Cys-442. 3 N-linked (GlcNAc...) asparagine glycosylation sites follow: Asn-91, Asn-143, and Asn-292. N-linked (GlcNAc...) asparagine glycans are attached at residues Asn-502, Asn-517, and Asn-565. 4 cysteine pairs are disulfide-bonded: Cys-617/Cys-724, Cys-737/Cys-919, Cys-753/Cys-786, and Cys-838/Cys-869. The N-linked (GlcNAc...) asparagine glycan is linked to Asn-749. The N-linked (GlcNAc...) asparagine glycan is linked to Asn-830. N-linked (GlcNAc...) asparagine glycans are attached at residues Asn-888, Asn-915, and Asn-920. A helical transmembrane segment spans residues 938-958 (VYLVAALIFVLMLTFISILVL). The Cytoplasmic segment spans residues 959–985 (SYFWYLKIYRQFIIEPLHKRPAKQKKN).

Belongs to the CATSPERD family. Component of the CatSper complex or CatSpermasome composed of the core pore-forming members CATSPER1, CATSPER2, CATSPER3 and CATSPER4 as well as auxiliary members CATSPERB, CATSPERG2, CATSPERD, CATSPERE, CATSPERZ, C2CD6/CATSPERT, SLCO6C1, TMEM249, TMEM262 and EFCAB9. HSPA1 may be an additional auxiliary complex member. The core complex members CATSPER1, CATSPER2, CATSPER3 and CATSPER4 form a heterotetrameric channel. The auxiliary CATSPERB, CATSPERG2, CATSPERD and CATSPERE subunits form a pavilion-like structure over the pore which stabilizes the complex through interactions with CATSPER4, CATSPER3, CATSPER1 and CATSPER2 respectively. SLCO6C1 interacts with CATSPERE and TMEM262/CATSPERH interacts with CATSPERB, further stabilizing the complex. C2CD6/CATSPERT interacts at least with CATSPERD and is required for targeting the CatSper complex in the flagellar membrane. Testis-specific.

The protein resides in the cell projection. It localises to the cilium. It is found in the flagellum membrane. Auxiliary component of the CatSper complex, a complex involved in sperm cell hyperactivation. Sperm cell hyperactivation is needed for sperm motility which is essential late in the preparation of sperm for fertilization. This is Cation channel sperm-associated auxiliary subunit epsilon from Mus musculus (Mouse).